A 409-amino-acid polypeptide reads, in one-letter code: MKHLVERFLRYVTFDTQSNPHVAQCPSSPGQLVFAELLKQEMLDFGLSDVTLDEHGYLMAKLPSNVDYDVPPIGFIAHMDTAPDASGKNVNPQFVEDYQGGDIALGLGDEVLSPVQYPDLHNLHGHNLITTDGTTLLGADNKAGIAEILSAIAMLIENPDIPHGDICIGFTPDEEIGRGADLFDVEKFGAKWAYTIDGGPQGELEYENFNAASADVIFHGVSVHPGTAKGKMVNAMNLAAQFQVKMPADQTPETTEGYEGFFHLKSGELGIARSELGYIIRDFDREGLEERKALMQKLVDEMNAGLKHGSVELNITDSYYNMREMVEPYPHIIELAKQAMEACDVEPLIKPIRGGTDGARLSFMGLPCPNIFTGGFNFHGIHEFISVEMMEKSVLVIVKIAELTAKKHG.

H78 serves as a coordination point for Zn(2+). D80 is a catalytic residue. D140 provides a ligand contact to Zn(2+). E174 acts as the Proton acceptor in catalysis. Residues E175, D197, and H379 each coordinate Zn(2+).

This sequence belongs to the peptidase M20B family. Zn(2+) serves as cofactor.

The protein localises to the cytoplasm. The catalysed reaction is Release of the N-terminal residue from a tripeptide.. Functionally, cleaves the N-terminal amino acid of tripeptides. The sequence is that of Peptidase T from Vibrio parahaemolyticus serotype O3:K6 (strain RIMD 2210633).